Consider the following 121-residue polypeptide: Small ribosomal subunit protein uS13 (121 aa).

Residues 91 to 121 (HRMSLPVRGQRTRTNARTRRGSRKTVAGRKK) form a disordered region. Positions 100-121 (QRTRTNARTRRGSRKTVAGRKK) are enriched in basic residues.

It belongs to the universal ribosomal protein uS13 family. In terms of assembly, part of the 30S ribosomal subunit. Forms a loose heterodimer with protein S19. Forms two bridges to the 50S subunit in the 70S ribosome.

Located at the top of the head of the 30S subunit, it contacts several helices of the 16S rRNA. In the 70S ribosome it contacts the 23S rRNA (bridge B1a) and protein L5 of the 50S subunit (bridge B1b), connecting the 2 subunits; these bridges are implicated in subunit movement. Contacts the tRNAs in the A and P-sites. The polypeptide is Small ribosomal subunit protein uS13 (Prochlorococcus marinus (strain MIT 9211)).